Here is a 575-residue protein sequence, read N- to C-terminus: MSQDGKVKTTESTPPAPTKARKWLPVLDPSGDYYYWWLNTMVFPIMYNLIIVVCRACFPDLQHSYLVAWFVLDYTSDLLYLLDIGVRFHTGFLEQGILVVDKGMIASRYVRTWSFLLDLASLVPTDAAYVQLGPHIPTLRLNRFLRVPRLFEAFDRTETRTAYPNAFRIAKLMLYIFVVIHWNSCLYFALSRYLGFGRDAWVYPDPAQPGFERLRRQYLYSFYFSTLILTTVGDTPLPDREEEYLFMVGDFLLAVMGFATIMGSMSSVIYNMNTADAAFYPDHALVKKYMKLQHVNKRLERRVIDWYQHLQINKKMTNEVAILQHLPERLRAEVAVSVHLSTLSRVQIFQNCEASLLEELVLKLQPQTYSPGEYVCRKGDIGREMYIIREGQLAVVADDGVTQYAVLGAGLYFGEISIINIKGNMSGNRRTANIKSLGYSDLFCLSKEDLREVLSEYPQAQAVMEEKGREILLKMNKLDVNAEAAEIALQEATESRLKGLDQQLDDLQTKFARLLAELESSALKIAYRIERLEWQTREWPMPEDMGEADDEAEPGEGTSKDGEGKAGQAGPSGIE.

At 1–38 the chain is on the cytoplasmic side; the sequence is MSQDGKVKTTESTPPAPTKARKWLPVLDPSGDYYYWWL. A helical membrane pass occupies residues 39-60; the sequence is NTMVFPIMYNLIIVVCRACFPD. The Extracellular portion of the chain corresponds to 61-70; sequence LQHSYLVAWF. The chain crosses the membrane as a helical span at residues 71–91; the sequence is VLDYTSDLLYLLDIGVRFHTG. Over 92 to 116 the chain is Cytoplasmic; sequence FLEQGILVVDKGMIASRYVRTWSFL. Residues 117–135 form a helical membrane-spanning segment; sequence LDLASLVPTDAAYVQLGPH. The Extracellular portion of the chain corresponds to 136–140; it reads IPTLR. Residues 141 to 159 form a helical membrane-spanning segment; that stretch reads LNRFLRVPRLFEAFDRTET. Over 160–166 the chain is Cytoplasmic; it reads RTAYPNA. Residues 164–272 form an ion conduction pathway region; it reads PNAFRIAKLM…GSMSSVIYNM (109 aa). A helical transmembrane segment spans residues 167 to 190; that stretch reads FRIAKLMLYIFVVIHWNSCLYFAL. Topologically, residues 191 to 213 are extracellular; that stretch reads SRYLGFGRDAWVYPDPAQPGFER. The next 2 helical transmembrane spans lie at 214–248 and 249–273; these read LRRQ…LFMV and GDFL…YNMN. Positions 231-234 are selectivity filter; that stretch reads TVGD. Residues 274–350 are C-linker; sequence TADAAFYPDH…STLSRVQIFQ (77 aa). At 274 to 575 the chain is on the cytoplasmic side; the sequence is TADAAFYPDH…AGQAGPSGIE (302 aa). The IQ-type signature appears at 292 to 302; that stretch reads LQHVNKRLERR. 348 to 471 lines the a nucleoside 3',5'-cyclic phosphate pocket; it reads IFQNCEASLL…AVMEEKGREI (124 aa). Residues 354 to 474 are cyclic nucleotide-binding domain; that stretch reads ASLLEELVLK…EEKGREILLK (121 aa). 3',5'-cyclic GMP-binding residues include glycine 414, serine 417, arginine 430, and threonine 431. The 3',5'-cyclic AMP site is built by arginine 430 and threonine 431. The stretch at 493 to 547 forms a coiled coil; the sequence is TESRLKGLDQQLDDLQTKFARLLAELESSALKIAYRIERLEWQTREWPMPEDMGE. The interval 537–575 is disordered; the sequence is REWPMPEDMGEADDEAEPGEGTSKDGEGKAGQAGPSGIE. Positions 544–554 are enriched in acidic residues; that stretch reads DMGEADDEAEP.

Belongs to the cyclic nucleotide-gated cation channel (TC 1.A.1.5) family. CNGA4 subfamily. The olfactory cyclic nucleotide-gated channel is an heterotetramer composed of CNGA2, CNGA4 and CNGB1b subunits with 2:1:1 stoichiometry. May form homomeric channels gated by nitric oxide. Post-translationally, N-glycosylated. In terms of tissue distribution, olfactory neurons. Expressed in olfactory sensory cilia (at protein level).

Its subcellular location is the cell projection. It localises to the cilium membrane. It catalyses the reaction Ca(2+)(in) = Ca(2+)(out). It carries out the reaction Na(+)(in) = Na(+)(out). The catalysed reaction is K(+)(in) = K(+)(out). The enzyme catalyses NH4(+)(in) = NH4(+)(out). It catalyses the reaction Rb(+)(in) = Rb(+)(out). It carries out the reaction Li(+)(in) = Li(+)(out). The catalysed reaction is Cs(+)(in) = Cs(+)(out). Ca(2+)-calmodulin exerts its inhibitory effect in cAMP sensitivity by binding to IQ-like motif of CNGA4 and preferably binds to the channel in the closed state. Inhibition by PIP3 of the CNG channel probably occurs via CGNA2 binding. Ca(2+) currents are inhibited by pimozide, an L-type Ca(2+) channel blocker. In terms of biological role, pore-forming subunit of the olfactory cyclic nucleotide-gated channel. Operates in the cilia of olfactory sensory neurons where chemical stimulation of the odorant is converted to an electrical signal. Mediates odorant-induced cAMP-dependent Ca(2+) influx triggering neuron depolarization. The rise of intracellular Ca(2+) levels potentiates the olfactory response by activating Ca(2+)-dependent Cl(-) channels, but it also serves as a negative feedback signal to desensitize the channel for rapid adaptation to odorants. Conducts cAMP- and cGMP-gated ion currents, with permeability for monovalent and divalent cations. May conduct nitric oxide-gated Ca(2+) currents relevant to neurons of vomeronasal organ, a system involved in the perception of pheromones. The polypeptide is Cyclic nucleotide-gated channel alpha-4 (Rattus norvegicus (Rat)).